The sequence spans 381 residues: Cytochrome b (381 aa).

4 consecutive transmembrane segments (helical) span residues 34-54 (FGSL…FLAM), 78-99 (WLIR…YLHI), 114-134 (WNTG…GYVL), and 179-199 (FFTF…VHLL). 2 residues coordinate heme b: His-84 and His-98. Positions 183 and 197 each coordinate heme b. His-202 contacts a ubiquinone. Helical transmembrane passes span 227 to 247 (YKDL…TLFS), 289 to 309 (LGGV…PTLH), 321 to 341 (LTQI…WIGG), and 348 to 368 (FIII…LLMP).

The protein belongs to the cytochrome b family. In terms of assembly, the cytochrome bc1 complex contains 3 respiratory subunits (MT-CYB, CYC1 and UQCRFS1), 2 core proteins (UQCRC1 and UQCRC2) and probably 6 low-molecular weight proteins. Heme b is required as a cofactor.

It is found in the mitochondrion inner membrane. In terms of biological role, component of the ubiquinol-cytochrome c reductase complex (complex III or cytochrome b-c1 complex) that is part of the mitochondrial respiratory chain. The b-c1 complex mediates electron transfer from ubiquinol to cytochrome c. Contributes to the generation of a proton gradient across the mitochondrial membrane that is then used for ATP synthesis. The protein is Cytochrome b (MT-CYB) of Chelonia mydas (Green sea-turtle).